We begin with the raw amino-acid sequence, 472 residues long: Na(+)/H(+) antiporter NhaA (472 aa).

Transmembrane regions (helical) follow at residues 48–68 (AGGI…NSAW), 91–111 (MSLH…VVGL), 129–149 (ALPV…YFAV), 157–177 (AGWG…LVLL), 185–205 (LIIF…LVIA), 210–230 (HEIS…LLLL), 237–257 (HAIP…HSGV), 337–357 (GPWV…GIDF), 374–394 (VCLG…WIAV), 410–430 (LLGV…ISQL), and 443–463 (LGIL…LYFG).

The protein belongs to the NhaA Na(+)/H(+) (TC 2.A.33) antiporter family.

Its subcellular location is the cell inner membrane. It carries out the reaction Na(+)(in) + 2 H(+)(out) = Na(+)(out) + 2 H(+)(in). In terms of biological role, na(+)/H(+) antiporter that extrudes sodium in exchange for external protons. This is Na(+)/H(+) antiporter NhaA from Syntrophobacter fumaroxidans (strain DSM 10017 / MPOB).